Consider the following 1106-residue polypeptide: Carbamoyl phosphate synthase large chain (1106 aa).

The interval 1–402 (MPRRQDLNSV…ALQKAMRSLE (402 aa)) is carboxyphosphate synthetic domain. The ATP site is built by Arg129, Arg169, Gly175, Gly176, Glu208, Ile210, Glu215, Gly241, Val242, His243, Gln285, and Glu299. The region spanning 133-328 (KGVVERCGAE…IAKIATKLSL (196 aa)) is the ATP-grasp 1 domain. Mg(2+) contacts are provided by Gln285, Glu299, and Asn301. Mn(2+) contacts are provided by Gln285, Glu299, and Asn301. An oligomerization domain region spans residues 403–550 (QKGSAFSFAR…YHYSSYDRET (148 aa)). The interval 551–953 (EVAPHEKPSV…AFAKAQAAAG (403 aa)) is carbamoyl phosphate synthetic domain. In terms of domain architecture, ATP-grasp 2 spans 681-872 (ARVLTEAGLR…MAKAAALIGT (192 aa)). The ATP site is built by Arg717, Lys756, Leu758, Glu763, Gly788, Ile789, His790, Ser791, Gln831, and Glu843. Mg(2+) contacts are provided by Gln831, Glu843, and Asn845. Mn(2+) is bound by residues Gln831, Glu843, and Asn845. In terms of domain architecture, MGS-like spans 954 to 1106 (GPLPTSGSLF…ERAAQEASRD (153 aa)). An allosteric domain region spans residues 954-1106 (GPLPTSGSLF…ERAAQEASRD (153 aa)).

It belongs to the CarB family. In terms of assembly, composed of two chains; the small (or glutamine) chain promotes the hydrolysis of glutamine to ammonia, which is used by the large (or ammonia) chain to synthesize carbamoyl phosphate. Tetramer of heterodimers (alpha,beta)4. It depends on Mg(2+) as a cofactor. Requires Mn(2+) as cofactor.

It carries out the reaction hydrogencarbonate + L-glutamine + 2 ATP + H2O = carbamoyl phosphate + L-glutamate + 2 ADP + phosphate + 2 H(+). It catalyses the reaction hydrogencarbonate + NH4(+) + 2 ATP = carbamoyl phosphate + 2 ADP + phosphate + 2 H(+). It participates in amino-acid biosynthesis; L-arginine biosynthesis; carbamoyl phosphate from bicarbonate: step 1/1. The protein operates within pyrimidine metabolism; UMP biosynthesis via de novo pathway; (S)-dihydroorotate from bicarbonate: step 1/3. Its function is as follows. Large subunit of the glutamine-dependent carbamoyl phosphate synthetase (CPSase). CPSase catalyzes the formation of carbamoyl phosphate from the ammonia moiety of glutamine, carbonate, and phosphate donated by ATP, constituting the first step of 2 biosynthetic pathways, one leading to arginine and/or urea and the other to pyrimidine nucleotides. The large subunit (synthetase) binds the substrates ammonia (free or transferred from glutamine from the small subunit), hydrogencarbonate and ATP and carries out an ATP-coupled ligase reaction, activating hydrogencarbonate by forming carboxy phosphate which reacts with ammonia to form carbamoyl phosphate. This is Carbamoyl phosphate synthase large chain from Kocuria rhizophila (strain ATCC 9341 / DSM 348 / NBRC 103217 / DC2201).